A 249-amino-acid polypeptide reads, in one-letter code: Structural protein VP10 (249 aa).

The protein resides in the virion. In terms of biological role, forms the virion spike 'foot' and helps anchor the VP9 spike 'head' protein in the virion. The polypeptide is Structural protein VP10 (Segment-10) (Banna virus (BAV)).